A 565-amino-acid polypeptide reads, in one-letter code: Wee1-like protein kinase 2 (565 aa).

Basic and acidic residues-rich tracts occupy residues 1–12 (MGDNGDNKELKQ) and 26–52 (EGQK…DSEA). 2 disordered regions span residues 1-142 (MGDN…TPGP) and 169-189 (KSNG…EEGK). Residue serine 77 is modified to Phosphoserine. The Nuclear localization signal signature appears at 173-175 (KRK). The segment covering 178–189 (RDLEEAGPEEGK) has biased composition (basic and acidic residues). The region spanning 214–492 (FLEVEKIGVG…TRSRVLCPSL (279 aa)) is the Protein kinase domain. ATP-binding positions include 220–228 (IGVGEFGTV) and lysine 243. The short motif at 317-331 (KLKDILLQISLGLKY) is the Nuclear export signal element. The Proton acceptor role is filled by aspartate 341. Positions 346 and 382 each coordinate Mg(2+). Residues 495-521 (TEELQQQLNLEKFKTATLERELKEVQR) adopt a coiled-coil conformation. The tract at residues 518–565 (EVQRAQSSKEGQSSPGVTGTHTGSRSTRRLVGGKSAKSSSFTWGQSSP) is disordered. Polar residues-rich tracts occupy residues 521-534 (RAQS…SPGV) and 553-565 (AKSS…QSSP).

This sequence belongs to the protein kinase superfamily. Ser/Thr protein kinase family. WEE1 subfamily. In terms of processing, phosphorylation leads to increase its activity. Ovary-specific.

The protein resides in the nucleus. The catalysed reaction is L-tyrosyl-[protein] + ATP = O-phospho-L-tyrosyl-[protein] + ADP + H(+). Its function is as follows. Oocyte-specific protein tyrosine kinase that phosphorylates and inhibits CDK1 and acts as a key regulator of meiosis during both prophase I and metaphase II. Required to maintain meiotic arrest in oocytes during the germinal vesicle (GV) stage, a long period of quiescence at dictyate prophase I, by phosphorylating CDK1 at 'Tyr-15', leading to inhibit CDK1 activity and prevent meiotic reentry. Also required for metaphase II exit during egg activation by phosphorylating CDK1 at 'Tyr-15', to ensure exit from meiosis in oocytes and promote pronuclear formation. The polypeptide is Wee1-like protein kinase 2 (WEE2) (Sus scrofa (Pig)).